Reading from the N-terminus, the 589-residue chain is DNA mismatch repair protein MutL (589 aa).

Disordered regions lie at residues 330–355 (LQRR…SHRE) and 374–394 (RIYE…SEPT). Residues 331–341 (QRREAPQRPEP) are compositionally biased toward basic and acidic residues. The segment covering 381 to 390 (PYRPPEPPAA) has biased composition (pro residues).

It belongs to the DNA mismatch repair MutL/HexB family.

In terms of biological role, this protein is involved in the repair of mismatches in DNA. It is required for dam-dependent methyl-directed DNA mismatch repair. May act as a 'molecular matchmaker', a protein that promotes the formation of a stable complex between two or more DNA-binding proteins in an ATP-dependent manner without itself being part of a final effector complex. The sequence is that of DNA mismatch repair protein MutL from Trichlorobacter lovleyi (strain ATCC BAA-1151 / DSM 17278 / SZ) (Geobacter lovleyi).